The primary structure comprises 93 residues: Small ribosomal subunit protein uS15 (93 aa).

The protein belongs to the universal ribosomal protein uS15 family. In terms of assembly, part of the 30S ribosomal subunit. Forms a bridge to the 50S subunit in the 70S ribosome, contacting the 23S rRNA.

Its function is as follows. One of the primary rRNA binding proteins, it binds directly to 16S rRNA where it helps nucleate assembly of the platform of the 30S subunit by binding and bridging several RNA helices of the 16S rRNA. Forms an intersubunit bridge (bridge B4) with the 23S rRNA of the 50S subunit in the ribosome. The polypeptide is Small ribosomal subunit protein uS15 (Anaplasma marginale (strain St. Maries)).